The following is a 443-amino-acid chain: Methylenetetrahydrofolate--tRNA-(uracil-5-)-methyltransferase TrmFO (443 aa).

Position 8-13 (8-13 (GAGLAG)) interacts with FAD.

This sequence belongs to the MnmG family. TrmFO subfamily. Requires FAD as cofactor.

Its subcellular location is the cytoplasm. The catalysed reaction is uridine(54) in tRNA + (6R)-5,10-methylene-5,6,7,8-tetrahydrofolate + NADH + H(+) = 5-methyluridine(54) in tRNA + (6S)-5,6,7,8-tetrahydrofolate + NAD(+). The enzyme catalyses uridine(54) in tRNA + (6R)-5,10-methylene-5,6,7,8-tetrahydrofolate + NADPH + H(+) = 5-methyluridine(54) in tRNA + (6S)-5,6,7,8-tetrahydrofolate + NADP(+). Functionally, catalyzes the folate-dependent formation of 5-methyl-uridine at position 54 (M-5-U54) in all tRNAs. In Thermus thermophilus (strain ATCC 27634 / DSM 579 / HB8), this protein is Methylenetetrahydrofolate--tRNA-(uracil-5-)-methyltransferase TrmFO.